The following is a 249-amino-acid chain: 1-(5-phosphoribosyl)-5-[(5-phosphoribosylamino)methylideneamino] imidazole-4-carboxamide isomerase (249 aa).

Asp8 serves as the catalytic Proton acceptor. Asp131 serves as the catalytic Proton donor.

The protein belongs to the HisA/HisF family.

It is found in the cytoplasm. It catalyses the reaction 1-(5-phospho-beta-D-ribosyl)-5-[(5-phospho-beta-D-ribosylamino)methylideneamino]imidazole-4-carboxamide = 5-[(5-phospho-1-deoxy-D-ribulos-1-ylimino)methylamino]-1-(5-phospho-beta-D-ribosyl)imidazole-4-carboxamide. It participates in amino-acid biosynthesis; L-histidine biosynthesis; L-histidine from 5-phospho-alpha-D-ribose 1-diphosphate: step 4/9. The protein is 1-(5-phosphoribosyl)-5-[(5-phosphoribosylamino)methylideneamino] imidazole-4-carboxamide isomerase of Leptothrix cholodnii (strain ATCC 51168 / LMG 8142 / SP-6) (Leptothrix discophora (strain SP-6)).